Reading from the N-terminus, the 403-residue chain is Tryptophan synthase beta chain (403 aa).

Lys88 is modified (N6-(pyridoxal phosphate)lysine).

This sequence belongs to the TrpB family. Tetramer of two alpha and two beta chains. Requires pyridoxal 5'-phosphate as cofactor.

It catalyses the reaction (1S,2R)-1-C-(indol-3-yl)glycerol 3-phosphate + L-serine = D-glyceraldehyde 3-phosphate + L-tryptophan + H2O. It participates in amino-acid biosynthesis; L-tryptophan biosynthesis; L-tryptophan from chorismate: step 5/5. The beta subunit is responsible for the synthesis of L-tryptophan from indole and L-serine. In Shewanella frigidimarina (strain NCIMB 400), this protein is Tryptophan synthase beta chain.